Here is a 5209-residue protein sequence, read N- to C-terminus: E3 ubiquitin-protein ligase rnf213-alpha (5209 aa).

Polar residues-rich tracts occupy residues 27 to 52 (SQSYETTQGTPHDKSQTPSIVPQITN) and 61 to 72 (ESKSLEIQNANV). A disordered region spans residues 27–373 (SQSYETTQGT…KRNTRSTQHI (347 aa)). Residues 85 to 101 (PKKKKRKKRKKEKKKKS) show a composition bias toward basic residues. Residues 108 to 118 (SSLTSDLSDIS) are compositionally biased toward low complexity. A compositionally biased stretch (basic and acidic residues) spans 119 to 128 (LTDKEKKMDT). Polar residues-rich tracts occupy residues 167–177 (LSASALTTGSS) and 184–195 (IGTTQKPVSASA). Residues 205–218 (QTKEEKVKCKDEGQ) show a composition bias toward basic and acidic residues. Polar residues predominate over residues 219 to 243 (KSLSAKAQHTPNANVDQNANVQSDA). Over residues 256-269 (KSSSVKTKPSKSTV) the composition is skewed to low complexity. 2 stretches are compositionally biased toward basic and acidic residues: residues 271–288 (DPKKTESEKQKSGERDNE) and 330–352 (MKVEKKPAGGKKDSSADQKSKES). ATP contacts are provided by residues 2036–2041 (GVGKSL), Glu-2135, Asp-2193, Arg-2252, Lys-2535, and Ser-2610. Zn(2+)-binding residues include Cys-4005, Cys-4008, Cys-4020, His-4022, Cys-4025, Cys-4028, Cys-4040, Cys-4043, Cys-4507, and His-4511. Residues 4005 to 4043 (CPVCMGDPRDPLSLPCDHIYCLTCIRQWLVPGQMHCPLC) form an RING-type zinc finger. Residues 4487–4557 (MPDDMLAVAQ…MQIQADRTQS (71 aa)) form an RZ-type zinc finger. Residue Cys-4518 is the Nucleophile; for E3 ubiquitin-lipopolysaccharide ligase activity of the active site. Zn(2+) is bound by residues Cys-4527 and Cys-4530.

Belongs to the AAA ATPase family.

The protein resides in the cytoplasm. The protein localises to the cytosol. It localises to the lipid droplet. The enzyme catalyses S-ubiquitinyl-[E2 ubiquitin-conjugating enzyme]-L-cysteine + [acceptor protein]-L-lysine = [E2 ubiquitin-conjugating enzyme]-L-cysteine + N(6)-ubiquitinyl-[acceptor protein]-L-lysine.. It carries out the reaction ATP + H2O = ADP + phosphate + H(+). It participates in protein modification; protein ubiquitination. Atypical E3 ubiquitin ligase that can catalyze ubiquitination of both proteins and lipids, and which is involved in various processes, such as lipid metabolism, angiogenesis and cell-autonomous immunity. Acts as a key immune sensor by catalyzing ubiquitination of the lipid A moiety of bacterial lipopolysaccharide (LPS) via its RZ-type zinc-finger: restricts the proliferation of cytosolic bacteria, such as Salmonella, by generating the bacterial ubiquitin coat through the ubiquitination of LPS. Ubiquitination of LPS triggers cell-autonomous immunity, such as antibacterial autophagy, leading to degradation of the microbial invader. Involved in lipid metabolism by regulating fat storage and lipid droplet formation; act by inhibiting the lipolytic process. Also regulates lipotoxicity by inhibiting desaturation of fatty acids. Also acts as an E3 ubiquitin-protein ligase via its RING-type zinc finger. Involved in the non-canonical Wnt signaling pathway in vascular development: acts by mediating ubiquitination and degradation of proteins downstream of rspo3, leading to inhibit the non-canonical Wnt signaling pathway and promoting vessel regression. Also has ATPase activity; ATPase activity is required for ubiquitination of LPS. Also involved in neuromuscular regulation. The polypeptide is E3 ubiquitin-protein ligase rnf213-alpha (Danio rerio (Zebrafish)).